Here is a 112-residue protein sequence, read N- to C-terminus: uncharacterized protein (112 aa).

The helical transmembrane segment at 82-104 (IFFGFSIIASYFLKFHLLYVILL) threads the bilayer.

The protein resides in the membrane. This is an uncharacterized protein from Pasteurella multocida (strain Pm70).